The following is a 313-amino-acid chain: Curved DNA-binding protein (313 aa).

Residues 5-69 form the J domain; that stretch reads DYYKILGVSR…EKRKAYDAIG (65 aa). A disordered region spans residues 71-93; that stretch reads GWKQGQGFTPPPGWESRPGGEGV.

It is found in the cytoplasm. The protein resides in the nucleoid. DNA-binding protein that preferentially recognizes a curved DNA sequence. It is probably a functional analog of DnaJ; displays overlapping activities with DnaJ, but functions under different conditions, probably acting as a molecular chaperone in an adaptive response to environmental stresses other than heat shock. Lacks autonomous chaperone activity; binds native substrates and targets them for recognition by DnaK. Its activity is inhibited by the binding of CbpM. The sequence is that of Curved DNA-binding protein from Coxiella burnetii (strain Dugway 5J108-111).